The chain runs to 266 residues: CAAX prenyl protease 2 (266 aa).

Helical transmembrane passes span 1 to 21 (MGAGLVSACLPISYVLLVHLF), 42 to 59 (LLSNFVSIVVTAFYLRDY), and 78 to 98 (ITYPFILMNAFYLGQFVMMQI). Catalysis depends on proton donor/acceptor residues Glu131 and His164. 3 consecutive transmembrane segments (helical) span residues 186–206 (GFQFCYTYLFGAFATWLQLTT), 210–230 (IVPIIAHAFCNAQGLPLWLEI), and 239–259 (RLTLYAAYSVGFAAFVHLLYT).

It belongs to the peptidase U48 family.

Its subcellular location is the endoplasmic reticulum membrane. The protein resides in the membrane. It catalyses the reaction Hydrolyzes the peptide bond -P2-(S-farnesyl or geranylgeranyl)C-P1'-P2'-P3'-COOH where P1' and P2' are amino acids with aliphatic sidechains and P3' is any C-terminal residue.. In terms of biological role, protease involved in the processing of a variety of prenylated proteins containing the C-terminal CAAX motif, where C is a cysteine modified with an isoprenoid lipid, A is an aliphatic amino acid and X is any C-terminal amino acid. Proteolytically removes the C-terminal three residues of farnesylated and geranylated proteins, leaving the prenylated cysteine as the new C-terminus. This is CAAX prenyl protease 2 from Caenorhabditis elegans.